Consider the following 223-residue polypeptide: Glycerol-3-phosphate acyltransferase (223 aa).

5 helical membrane-spanning segments follow: residues 2 to 22 (LEILWIALAYVLGSAPWGLVI), 52 to 72 (WGVATLLCDVLKGAVPVWLAF), 78 to 98 (PVFVSMVALACVLGHVFSCFM), 112 to 132 (IFLPLAFWQLLASSLLCMLVI), and 153 to 173 (LAVSGQWGWLPLSLAVWAVVV). Residues 191–223 (WLKSKNKGAAAGNAAEGDDTQNMNPQDAGRKDG) form a disordered region.

This sequence belongs to the PlsY family. In terms of assembly, probably interacts with PlsX.

The protein resides in the cell inner membrane. It carries out the reaction an acyl phosphate + sn-glycerol 3-phosphate = a 1-acyl-sn-glycero-3-phosphate + phosphate. It participates in lipid metabolism; phospholipid metabolism. Its function is as follows. Catalyzes the transfer of an acyl group from acyl-phosphate (acyl-PO(4)) to glycerol-3-phosphate (G3P) to form lysophosphatidic acid (LPA). This enzyme utilizes acyl-phosphate as fatty acyl donor, but not acyl-CoA or acyl-ACP. The sequence is that of Glycerol-3-phosphate acyltransferase from Desulfovibrio desulfuricans (strain ATCC 27774 / DSM 6949 / MB).